The chain runs to 515 residues: Integrator complex subunit 14 (515 aa).

The 203-residue stretch at 2 to 204 (PTVVVMDVSL…KNVQSMFGKL (203 aa)) folds into the VWFA domain. Mg(2+) contacts are provided by Ser10, Ser12, and Thr86. N6-acetyllysine is present on Lys418.

This sequence belongs to the Integrator subunit 14 family. As to quaternary structure, component of the Integrator complex, composed of core subunits INTS1, INTS2, INTS3, INTS4, INTS5, INTS6, INTS7, INTS8, INTS9/RC74, INTS10, INTS11/CPSF3L, INTS12, INTS13, INTS14 and INTS15. The core complex associates with protein phosphatase 2A subunits PPP2CA and PPP2R1A, to form the Integrator-PP2A (INTAC) complex. INTS14 is part of the tail subcomplex, composed of INTS10, INTS13, INTS14 and INTS15.

It localises to the nucleus. Component of the integrator complex, a multiprotein complex that terminates RNA polymerase II (Pol II) transcription in the promoter-proximal region of genes. The integrator complex provides a quality checkpoint during transcription elongation by driving premature transcription termination of transcripts that are unfavorably configured for transcriptional elongation: the complex terminates transcription by (1) catalyzing dephosphorylation of the C-terminal domain (CTD) of Pol II subunit POLR2A/RPB1 and SUPT5H/SPT5, (2) degrading the exiting nascent RNA transcript via endonuclease activity and (3) promoting the release of Pol II from bound DNA. The integrator complex is also involved in terminating the synthesis of non-coding Pol II transcripts, such as enhancer RNAs (eRNAs), small nuclear RNAs (snRNAs), telomerase RNAs and long non-coding RNAs (lncRNAs). Within the integrator complex, INTS14 is part of the integrator tail module that acts as a platform for the recruitment of transcription factors at promoters. This is Integrator complex subunit 14 from Rattus norvegicus (Rat).